Here is a 128-residue protein sequence, read N- to C-terminus: uncharacterized protein (128 aa).

Positions 95-123 form a coiled coil; it reads IIDFATAKRELDRLTEEIATLKGELAQDK.

It is found in the cellular thylakoid membrane. This is an uncharacterized protein from Synechocystis sp. (strain ATCC 27184 / PCC 6803 / Kazusa).